The sequence spans 481 residues: Dual specificity protein kinase CLK4 (481 aa).

Disordered regions lie at residues 1 to 46 (MRHS…CKPH) and 102 to 143 (SKSS…EDDE). Basic and acidic residues predominate over residues 8-24 (HCPDWDSRESWGHESYR). 2 stretches are compositionally biased toward basic residues: residues 25-34 (GSHKRKRRSH) and 106-136 (VRSRRSSPKRKRNRHCSSHQSRSKSHRRKRS). A phosphoserine mark is found at S136 and S138. Residues 159-475 (YEIVDTLGEG…LDEALQHPFF (317 aa)) form the Protein kinase domain. ATP is bound by residues 165–173 (LGEGAFGKV) and K189. The active-site Proton acceptor is the D286.

Belongs to the protein kinase superfamily. CMGC Ser/Thr protein kinase family. Lammer subfamily. Interacts with UBL5. In terms of processing, autophosphorylates on all three types of residues. In terms of tissue distribution, expressed in liver, kidney, heart, muscle, brain and endothelial cells.

The protein resides in the nucleus. The catalysed reaction is L-seryl-[protein] + ATP = O-phospho-L-seryl-[protein] + ADP + H(+). The enzyme catalyses L-threonyl-[protein] + ATP = O-phospho-L-threonyl-[protein] + ADP + H(+). It catalyses the reaction L-tyrosyl-[protein] + ATP = O-phospho-L-tyrosyl-[protein] + ADP + H(+). With respect to regulation, TG003 inhibits its kinase activity and affects the regulation of alternative splicing mediated by phosphorylation of SR proteins. Its function is as follows. Dual specificity kinase acting on both serine/threonine and tyrosine-containing substrates. Phosphorylates serine- and arginine-rich (SR) proteins of the spliceosomal complex and may be a constituent of a network of regulatory mechanisms that enable SR proteins to control RNA splicing. Phosphorylates SRSF1 and SRSF3. Required for the regulation of alternative splicing of MAPT/TAU. Regulates the alternative splicing of tissue factor (F3) pre-mRNA in endothelial cells. The protein is Dual specificity protein kinase CLK4 (CLK4) of Homo sapiens (Human).